The chain runs to 426 residues: 10-deoxymethynolide desosaminyltransferase (426 aa).

Belongs to the glycosyltransferase 28 family. In terms of assembly, forms a complex with DesVIII.

The enzyme catalyses 10-deoxymethynolide + dTDP-alpha-D-desosamine = 10-deoxymethymycin + dTDP + H(+). Its pathway is antibiotic biosynthesis. Involved in the biosynthesis of the macrolide antibiotics methymycin, neomethymycin, narbomycin, and pikromycin. Catalyzes the attachment of dTDP-D-desosamine onto 12- and 14-membered macrolactone rings 10-deoxymethynolide and narbonolide to produce 10-deoxymethymycin (YC-17) and narbomycin. DesVII is unique among glycosyltransferases in that it requires an additional protein component, DesVIII, for its activity. DesVII can recognize and process not only cyclic substrates of different ring size, but also a variety of linear substrates albeit with reduced, but measurable activities. Both L-sugars and D-sugars are recognized as substrates and variant substitutions at C-3 and C-4 are tolerated, but deoxygenation at C-6 is required. The sequence is that of 10-deoxymethynolide desosaminyltransferase from Streptomyces venezuelae.